Reading from the N-terminus, the 92-residue chain is MTTKAELVTAIAEKAGINKNQAKDALEAFIEAVTDSLKSGQDVRLVGFGTFKAVTRAAGTARNPRTGETVNRPASKTARFQVGEGLKSSLNS.

The disordered stretch occupies residues 58 to 92; the sequence is AGTARNPRTGETVNRPASKTARFQVGEGLKSSLNS.

Belongs to the bacterial histone-like protein family. As to quaternary structure, homodimer.

Functionally, histone-like DNA-binding protein which is capable of wrapping DNA to stabilize it, and thus to prevent its denaturation under extreme environmental conditions. In Caulobacter vibrioides (strain ATCC 19089 / CIP 103742 / CB 15) (Caulobacter crescentus), this protein is DNA-binding protein HU (hup).